The primary structure comprises 350 residues: Histidinol-phosphate aminotransferase (350 aa).

Residue Lys207 is modified to N6-(pyridoxal phosphate)lysine.

This sequence belongs to the class-II pyridoxal-phosphate-dependent aminotransferase family. Histidinol-phosphate aminotransferase subfamily. As to quaternary structure, homodimer. The cofactor is pyridoxal 5'-phosphate.

It carries out the reaction L-histidinol phosphate + 2-oxoglutarate = 3-(imidazol-4-yl)-2-oxopropyl phosphate + L-glutamate. The protein operates within amino-acid biosynthesis; L-histidine biosynthesis; L-histidine from 5-phospho-alpha-D-ribose 1-diphosphate: step 7/9. This is Histidinol-phosphate aminotransferase from Streptococcus thermophilus (strain ATCC BAA-491 / LMD-9).